Here is a 551-residue protein sequence, read N- to C-terminus: Serendipity locus protein alpha (551 aa).

It is found in the cytoplasm. Its subcellular location is the cell membrane. Functionally, required for the cellularization of the syncytial blastoderm embryo. Involved in the localization of the actin filaments just prior to and during plasma membrane invagination. Sry-alpha together with nullo and bnk may provide auxiliary functions, by acting both to stabilize a large and dynamic microfilament structure and regulate its functions. This is Serendipity locus protein alpha (Sry-alpha) from Drosophila pseudoobscura pseudoobscura (Fruit fly).